Here is a 479-residue protein sequence, read N- to C-terminus: Glycogen synthase (479 aa).

An ADP-alpha-D-glucose-binding site is contributed by Lys15.

It belongs to the glycosyltransferase 1 family. Bacterial/plant glycogen synthase subfamily.

It catalyses the reaction [(1-&gt;4)-alpha-D-glucosyl](n) + ADP-alpha-D-glucose = [(1-&gt;4)-alpha-D-glucosyl](n+1) + ADP + H(+). It participates in glycan biosynthesis; glycogen biosynthesis. Its function is as follows. Synthesizes alpha-1,4-glucan chains using ADP-glucose. The protein is Glycogen synthase of Nostoc punctiforme (strain ATCC 29133 / PCC 73102).